Here is a 504-residue protein sequence, read N- to C-terminus: MFGFDPSLITFTIYIFGMLLIGVLAYYYTNNLSDYILGGRRLGSFVTAMSAGASDMSGWLLMGLPGAVYLSGLVEGWIAIGLTIGAYFNWLLVAGRLRVYTELNNNALTLPEYFHNRFGSSHKLLKLVSATIILVFLTIYCASGVVAGAKLFQNIFSVEYSTALWYGAAATIAYTFIGGFLAVSWTDTIQATLMIFALILTPVFVLLSFADTAQFSAVLEQAEAAVNKDFTDLFTSTTPLGLLSLAAWGLGYFGQPHILARFMAADSVKSLIKARRISMGWMVLCLAGAIGIGLFAIPYFFANPAIAGTVNREPEQVFIELAKLLFNPWIAGILLSAILAAVMSTLSAQLLISSSSITEDFYKGFIRPNASEKELVWLGRIMVLVIAALAIWIAQDENSKVLKLVEFAWAGFGSAFGPVVLFSLFWKRMTSSGAMAGMLVGAVTVFAWKEVVPADTDWFKVYEMIPGFAFASLAIIVISLLSNKPEQDILNTFDKAEKAYKEAK.

13 helical membrane-spanning segments follow: residues 8–28 (LITF…AYYY), 50–70 (SAGA…AVYL), 73–93 (LVEG…WLLV), 127–147 (LVSA…GVVA), 163–183 (ALWY…FLAV), 189–209 (IQAT…LLSF), 240–260 (LGLL…HILA), 281–301 (WMVL…PYFF), 324–344 (LLFN…AVMS), 374–394 (ELVW…IWIA), 405–425 (VEFA…FSLF), 434–454 (AMAG…VVPA), and 461–481 (VYEM…ISLL).

Belongs to the sodium:solute symporter (SSF) (TC 2.A.21) family.

The protein localises to the cell inner membrane. The enzyme catalyses L-proline(in) + Na(+)(in) = L-proline(out) + Na(+)(out). Catalyzes the sodium-dependent uptake of extracellular L-proline. This Haemophilus influenzae (strain ATCC 51907 / DSM 11121 / KW20 / Rd) protein is Sodium/proline symporter (putP).